A 270-amino-acid polypeptide reads, in one-letter code: Putative phosphoenolpyruvate synthase regulatory protein (270 aa).

151–158 (GVSRCGKT) is an ADP binding site.

This sequence belongs to the pyruvate, phosphate/water dikinase regulatory protein family. PSRP subfamily.

The enzyme catalyses [pyruvate, water dikinase] + ADP = [pyruvate, water dikinase]-phosphate + AMP + H(+). It catalyses the reaction [pyruvate, water dikinase]-phosphate + phosphate + H(+) = [pyruvate, water dikinase] + diphosphate. Bifunctional serine/threonine kinase and phosphorylase involved in the regulation of the phosphoenolpyruvate synthase (PEPS) by catalyzing its phosphorylation/dephosphorylation. This is Putative phosphoenolpyruvate synthase regulatory protein from Methylobacillus flagellatus (strain ATCC 51484 / DSM 6875 / VKM B-1610 / KT).